Consider the following 294-residue polypeptide: 4-hydroxy-tetrahydrodipicolinate synthase (294 aa).

Threonine 47 is a binding site for pyruvate. Tyrosine 135 serves as the catalytic Proton donor/acceptor. Lysine 163 (schiff-base intermediate with substrate) is an active-site residue. Isoleucine 206 is a pyruvate binding site.

The protein belongs to the DapA family. Homodimer.

The protein localises to the cytoplasm. The catalysed reaction is L-aspartate 4-semialdehyde + pyruvate = (2S,4S)-4-hydroxy-2,3,4,5-tetrahydrodipicolinate + H2O + H(+). It functions in the pathway amino-acid biosynthesis; L-lysine biosynthesis via DAP pathway; (S)-tetrahydrodipicolinate from L-aspartate: step 3/4. Its function is as follows. Catalyzes the condensation of (S)-aspartate-beta-semialdehyde [(S)-ASA] and pyruvate to 4-hydroxy-tetrahydrodipicolinate (HTPA). The chain is 4-hydroxy-tetrahydrodipicolinate synthase from Staphylococcus carnosus (strain TM300).